A 445-amino-acid chain; its full sequence is Histone acetyltransferase of the MYST family 2 (445 aa).

The span at 1 to 23 (MGSSANTETNGNAPPPSSNQKPP) shows a compositional bias: polar residues. Residues 1 to 58 (MGSSANTETNGNAPPPSSNQKPPATNGVDGSHPPPPPLTPDQAIIESDPSKKRKMGML) are disordered. Residues 60–118 (LEVGTRVMCRWRDGKHHPVKVIERRRIHNGGQNDYEYYVHYTEFNRRLDEWTQLDQLDL) form the Tudor-knot domain. The MYST-type HAT domain maps to 169-440 (TKVKNISTIE…VDASKLIWTP (272 aa)). A C2HC MYST-type zinc finger spans residues 202–227 (LFFCEFCLNFMKRKEQLQRHMRKCDL). Lysine 269 bears the N6-acetyllysine; by autocatalysis mark. Acetyl-CoA contacts are provided by residues 312–314 (ILT) and 319–325 (QRKGYGK). Glutamate 345 serves as the catalytic Proton donor/acceptor. Serine 349 is a binding site for acetyl-CoA.

The protein belongs to the MYST (SAS/MOZ) family. As to quaternary structure, interacts with MRG1 and MRG2. Autoacetylation at Lys-269 is required for proper function. Expressed in cotyledons, leaves, stems, roots and, at higher levels in developing flowers, particularly in the anthers and gynoecia. Constitutively expressed in all tissues, predominantly in shoot apical meristem.

It localises to the nucleus. It carries out the reaction L-lysyl-[protein] + acetyl-CoA = N(6)-acetyl-L-lysyl-[protein] + CoA + H(+). Functionally, histone acetyltransferase which may be involved in transcriptional activation. Acetylates 'Lys-5' of histone H4 (H4K5ac). Essential for gametophyte development. Negative regulator of flowering controlling the H4K5ac levels in the FLC chromatin. In Arabidopsis thaliana (Mouse-ear cress), this protein is Histone acetyltransferase of the MYST family 2.